The sequence spans 129 residues: Protein BEX2 (129 aa).

The tract at residues 1 to 37 (MESKVEQGVKNLNMENDHQEKEEKEEKPQDASKRDPI) is disordered. Basic and acidic residues predominate over residues 15-36 (ENDHQEKEEKEEKPQDASKRDP). Arginine 51 carries the post-translational modification Omega-N-methylarginine. Residues 118–122 (HHDHH) form a his cluster region. Zn(2+) is bound at residue cysteine 126.

Belongs to the BEX family. In terms of assembly, interacts with LMO2, possibly leading to regulate the transcriptional activity of a DNA-binding complex containing LMO2. Interacts with OMP. Primarily localized to neuronal cells within several regions of the brain, including the olfactory epithelium, bulb, peri/paraventricular nuclei, suprachiasmatic nucleus, arcuate nucleus, median eminence, lateral hypothalamic area, thalamus, hippocampus and cerebellum (at protein level).

The protein localises to the cytoplasm. It is found in the nucleus. Functionally, regulator of mitochondrial apoptosis and G1 cell cycle. Regulates the level of PP2A regulatory subunit B and PP2A phosphatase activity. In absence of reductive stress, acts as a pseudosubstrate for the CRL2(FEM1B) complex: associates with FEM1B via zinc, thereby preventing association between FEM1B and its substrates. The sequence is that of Protein BEX2 from Mus musculus (Mouse).